A 432-amino-acid chain; its full sequence is Sensor histidine kinase YrkQ (432 aa).

The Cytoplasmic segment spans residues 1–12 (MAHLKFTLTKKL). A helical membrane pass occupies residues 13–33 (ALLIMVAAIVSGVIFLTLQKI). The Extracellular segment spans residues 34–145 (TDDLIEGYLS…GFYSSRYYDL (112 aa)). Residues 146 to 166 (AFALDLLGATLIFLIIVLFGI) traverse the membrane as a helical segment. Residues 167–219 (RQSLRYLKTIHQEIHILEGGELDYEMTIKGHDELAMIAKSIEDLRKAFLDKLK) enclose the HAMP domain. Residues 167 to 432 (RQSLRYLKTI…IVLRFWNTKM (266 aa)) are Cytoplasmic-facing. One can recognise a Histidine kinase domain in the interval 234-432 (EMSHDMRTPL…IVLRFWNTKM (199 aa)). Phosphohistidine; by autocatalysis is present on His-237.

It is found in the cell membrane. The enzyme catalyses ATP + protein L-histidine = ADP + protein N-phospho-L-histidine.. Its function is as follows. Member of the two-component regulatory system YrkQ/YrkP. Probably activates YrkP by phosphorylation. The protein is Sensor histidine kinase YrkQ (yrkQ) of Bacillus subtilis (strain 168).